The sequence spans 236 residues: 2-C-methyl-D-erythritol 4-phosphate cytidylyltransferase (236 aa).

The protein belongs to the IspD/TarI cytidylyltransferase family. IspD subfamily. Homodimer.

The catalysed reaction is 2-C-methyl-D-erythritol 4-phosphate + CTP + H(+) = 4-CDP-2-C-methyl-D-erythritol + diphosphate. Its pathway is isoprenoid biosynthesis; isopentenyl diphosphate biosynthesis via DXP pathway; isopentenyl diphosphate from 1-deoxy-D-xylulose 5-phosphate: step 2/6. Catalyzes the formation of 4-diphosphocytidyl-2-C-methyl-D-erythritol from CTP and 2-C-methyl-D-erythritol 4-phosphate (MEP). In Escherichia coli O7:K1 (strain IAI39 / ExPEC), this protein is 2-C-methyl-D-erythritol 4-phosphate cytidylyltransferase.